Reading from the N-terminus, the 150-residue chain is Linear element protein rec25 (150 aa).

Ser-11 is modified (phosphoserine).

As to quaternary structure, component of linear elements (LinEs), which are similar to synaptonemal complexes, at least composed of rec27, rec25, rec10 and mug20. Interacts with rec10; the interaction is direct.

The protein resides in the cytoplasm. Its subcellular location is the nucleus. It is found in the chromosome. In terms of biological role, during meiotic DNA recombination, binds to and may help activate DNA double-strand break (DSB) hotspot sites. The polypeptide is Linear element protein rec25 (Schizosaccharomyces pombe (strain 972 / ATCC 24843) (Fission yeast)).